The following is a 299-amino-acid chain: Ornithine carbamoyltransferase (299 aa).

Carbamoyl phosphate-binding positions include 52-55 (STRT), Gln-79, Arg-103, and 130-133 (HPCQ). Residues Asn-161, Asp-218, and 222-223 (SM) each bind L-ornithine. Carbamoyl phosphate is bound by residues 258–259 (CL) and Arg-286.

The protein belongs to the aspartate/ornithine carbamoyltransferase superfamily. OTCase family.

The protein resides in the cytoplasm. It catalyses the reaction carbamoyl phosphate + L-ornithine = L-citrulline + phosphate + H(+). It functions in the pathway amino-acid biosynthesis; L-arginine biosynthesis; L-arginine from L-ornithine and carbamoyl phosphate: step 1/3. Functionally, reversibly catalyzes the transfer of the carbamoyl group from carbamoyl phosphate (CP) to the N(epsilon) atom of ornithine (ORN) to produce L-citrulline. The sequence is that of Ornithine carbamoyltransferase from Ruthia magnifica subsp. Calyptogena magnifica.